The chain runs to 543 residues: Zinc finger protein 280B (543 aa).

Met1 carries the N-acetylmethionine modification. The span at 1–10 (MEQSCEEEKE) shows a compositional bias: acidic residues. The interval 1-23 (MEQSCEEEKEPEPQKNIQETKQV) is disordered. Phosphoserine occurs at positions 68 and 70. Positions 105–138 (SQLESRSTDSPIIIEPLSKPDYRNSSPQVVPNNS) are disordered. The segment covering 128-138 (NSSPQVVPNNS) has biased composition (low complexity). Residues Lys173, Lys247, and Lys261 each participate in a glycyl lysine isopeptide (Lys-Gly) (interchain with G-Cter in SUMO2) cross-link. C2H2-type zinc fingers lie at residues 343–366 (TTCQHCHRQFPTPFQLQCHIENVH), 373–396 (TVCKICELSFETDQVLLQHMKDHH), 432–454 (LLCPFCLKIFKTATPYMCHYRGH), and 460–483 (HQCSKCRLQFLTFKEKMEHKTQCH). The tract at residues 518–543 (ASITVSTSDSEPSLPRSKSKISKKSH) is disordered. Residues 534–543 (SKSKISKKSH) show a composition bias toward basic residues.

It is found in the nucleus. May function as a transcription factor. The chain is Zinc finger protein 280B (ZNF280B) from Homo sapiens (Human).